Reading from the N-terminus, the 441-residue chain is tRNA modification GTPase MnmE (441 aa).

Residues arginine 21, glutamate 78, and lysine 117 each contribute to the (6S)-5-formyl-5,6,7,8-tetrahydrofolate site. In terms of domain architecture, TrmE-type G spans 211–363; that stretch reads GIVMTIVGKP…LENKIVSKVK (153 aa). Asparagine 221 is a binding site for K(+). Residues 221–226, 240–246, and 265–268 each bind GTP; these read NSGKST, TDIPGTT, and DTAG. Serine 225 is a Mg(2+) binding site. Residues threonine 240, isoleucine 242, and threonine 245 each coordinate K(+). A Mg(2+)-binding site is contributed by threonine 246. Lysine 441 provides a ligand contact to (6S)-5-formyl-5,6,7,8-tetrahydrofolate.

It belongs to the TRAFAC class TrmE-Era-EngA-EngB-Septin-like GTPase superfamily. TrmE GTPase family. In terms of assembly, homodimer. Heterotetramer of two MnmE and two MnmG subunits. It depends on K(+) as a cofactor.

It localises to the cytoplasm. Its function is as follows. Exhibits a very high intrinsic GTPase hydrolysis rate. Involved in the addition of a carboxymethylaminomethyl (cmnm) group at the wobble position (U34) of certain tRNAs, forming tRNA-cmnm(5)s(2)U34. The sequence is that of tRNA modification GTPase MnmE from Thermosipho melanesiensis (strain DSM 12029 / CIP 104789 / BI429).